We begin with the raw amino-acid sequence, 212 residues long: GTP-binding protein EngB (212 aa).

The EngB-type G domain maps to 36–212 (TAPEVAFAGR…LRAAVYDAII (177 aa)). GTP-binding positions include 44–51 (GRSNVGKS), 71–75 (GRTQE), 91–94 (DMPG), 158–161 (TKSD), and 192–194 (TSS). 2 residues coordinate Mg(2+): Ser51 and Thr73.

Belongs to the TRAFAC class TrmE-Era-EngA-EngB-Septin-like GTPase superfamily. EngB GTPase family. Mg(2+) is required as a cofactor.

In terms of biological role, necessary for normal cell division and for the maintenance of normal septation. In Zymomonas mobilis subsp. mobilis (strain ATCC 31821 / ZM4 / CP4), this protein is GTP-binding protein EngB.